The sequence spans 110 residues: MADKVLKEKRKQFIRSVGEGTINGLLGELLETRVLSQEEIEIVKCENATVMDKARALLDSVIRKGAPACQICITYICEEDSHLAGTLGLSAGPTSGNHLTTQDSQIVLPS.

In terms of domain architecture, CARD spans 1–91 (MADKVLKEKR…HLAGTLGLSA (91 aa)).

As to quaternary structure, interacts with pro-CASP1. As to expression, ubiquitous.

It is found in the cytoplasm. Regulator of procaspase-1/CASP1 activation implicated in the regulation of the proteolytic maturation of pro-IL-1beta/IL1B and its release during inflammation. Inhibits the release of IL1B in response to LPS in monocytes. However, unlike CASP1, do not induce NF-kappa-B activation. The protein is Putative caspase recruitment domain-containing protein 17P (CARD17P) of Homo sapiens (Human).